Here is an 855-residue protein sequence, read N- to C-terminus: Zinc finger protein 814 (855 aa).

A KRAB domain is found at 15–91; sequence VTFEDVAVNF…PMAGVSPKKA (77 aa). Residues 120 to 142 form a C2H2-type 1; degenerate zinc finger; that stretch reads HRCEAWGNKLYDSGNFHQHQNEH. 22 consecutive C2H2-type zinc fingers follow at residues 242–264, 269–291, 296–318, 324–346, 352–374, 380–402, 408–430, 436–458, 464–486, 492–514, 520–542, 548–570, 576–598, 604–626, 632–654, 660–682, 688–710, 716–738, 744–766, 772–794, 800–822, and 828–850; these read YVCCECGKSFSKYASLSNHQRVH, HECGECGKSFSKYVSFSNHQRVH, YECGECGKSFSKYASFSNHQRVH, YECGECGKSFSKYVSFSNHQRVH, YECGECGKSFSQKSSLIQHQRFH, YGCEECGKSFSSEGHLRSHQRVH, FKCGECVKSFSHKRSLVHHQRVH, YQCGECGKSFSQKGNLVLHQRVH, YECGECGKSFSSKGHLRNHQQIH, YECGECGKSFSHKGTLILHQRVH, YGCGECGKSFSSIGHLRSHQRVH, YECGECGKSFSHKRSLVHHQRMH, YKCGDCGKSFNEKGHLRNHQRVH, FKCGECGKCFSHKGNLILHQHGH, YVCRECGKLFKKKSHLLVHQRIH, YACEACQKFFRNKYQLIAHQRVH, YECNDCGKSFTHSSTFCVHKRIH, YECSECGKSFAESSSFTKHKRVH, YECSECGKSFAESSSLTKHKRVH, and YKCEKCGKLFNKKSHLLVHQSSH. Residue lysine 335 forms a Glycyl lysine isopeptide (Lys-Gly) (interchain with G-Cter in SUMO2) linkage. Lysine 391 is covalently cross-linked (Glycyl lysine isopeptide (Lys-Gly) (interchain with G-Cter in SUMO2)).

This is Zinc finger protein 814 (ZNF814) from Homo sapiens (Human).